The primary structure comprises 302 residues: Lysosomal thioesterase PPT2 (302 aa).

The signal sequence occupies residues Met1–Ala27. N-linked (GlcNAc...) asparagine glycosylation is present at Asn60. Cystine bridges form between Cys109/Cys117 and Cys165/Cys176. Ser111 functions as the Nucleophile in the catalytic mechanism. Residues Asn190 and Asn206 are each glycosylated (N-linked (GlcNAc...) asparagine). Asp228 is a catalytic residue. N-linked (GlcNAc...) asparagine glycosylation is present at Asn245. An intrachain disulfide couples Cys276 to Cys296. His283 is an active-site residue. Asn289 carries N-linked (GlcNAc...) asparagine glycosylation.

The protein belongs to the palmitoyl-protein thioesterase family. As to expression, expressed throughout the brain, primarily in neurons, and at lower levels in glial cells.

The protein resides in the lysosome. It catalyses the reaction hexadecanoyl-CoA + H2O = hexadecanoate + CoA + H(+). The enzyme catalyses S-hexadecanoyl-N-acetylcysteamine + H2O = N-acetylcysteamine + hexadecanoate + H(+). In terms of biological role, catalyzes the cleavage of thioester bonds from S-palmitoyl-CoA or S-palmitoyl-N-acetylcysteamine (unbranched structures) but does not have activity against palmitoylcysteine or palmitoylated proteins, branched structures or bulky head groups. Conversely, hydrolyzes both long and short chain fatty acyl-CoA substrate. In Mus musculus (Mouse), this protein is Lysosomal thioesterase PPT2 (Ppt2).